A 239-amino-acid chain; its full sequence is Homeobox protein Nkx-2.8 (239 aa).

Positions 1 to 11 are enriched in polar residues; that stretch reads MATSGRLSFTV. The disordered stretch occupies residues 1-87; that stretch reads MATSGRLSFT…GSDAEKRKKR (87 aa). A compositionally biased stretch (basic and acidic residues) spans 21–32; sequence DAQHLPRREPEP. A compositionally biased stretch (low complexity) spans 62–79; the sequence is SPPDSSQRPSARPASPGS. Residues 84-143 constitute a DNA-binding region (homeobox); sequence RKKRRVLFSKAQTLELERRFRQQRYLSAPEREQLASLLRLTPTQVKIWFQNHRYKLKRAR.

Belongs to the NK-2 homeobox family.

The protein localises to the nucleus. This Homo sapiens (Human) protein is Homeobox protein Nkx-2.8 (NKX2-8).